A 300-amino-acid chain; its full sequence is 4-hydroxy-tetrahydrodipicolinate synthase (300 aa).

T57 contacts pyruvate. Y145 (proton donor/acceptor) is an active-site residue. The Schiff-base intermediate with substrate role is filled by K173. Residue I213 coordinates pyruvate.

It belongs to the DapA family. As to quaternary structure, homotetramer; dimer of dimers.

The protein localises to the cytoplasm. The enzyme catalyses L-aspartate 4-semialdehyde + pyruvate = (2S,4S)-4-hydroxy-2,3,4,5-tetrahydrodipicolinate + H2O + H(+). It participates in amino-acid biosynthesis; L-lysine biosynthesis via DAP pathway; (S)-tetrahydrodipicolinate from L-aspartate: step 3/4. In terms of biological role, catalyzes the condensation of (S)-aspartate-beta-semialdehyde [(S)-ASA] and pyruvate to 4-hydroxy-tetrahydrodipicolinate (HTPA). This is 4-hydroxy-tetrahydrodipicolinate synthase from Corynebacterium jeikeium (strain K411).